A 1127-amino-acid polypeptide reads, in one-letter code: uncharacterized protein (1127 aa).

An N-terminal signal peptide occupies residues 1–26 (MRIHQRSAPCVPVLLFLFLPSAPLCA). Residues 533 to 600 (ETESLSPPAD…ASSSPSEMAV (68 aa)) form a disordered region. Composition is skewed to low complexity over residues 536-549 (SLSPPADTASTPSP) and 583-599 (AGASEEADASSSPSEMA). Residues 1076–1126 (SEDEKEYQRALQELQKGNKLVASAVVEQLLQKDRNKKSAKIQQLKKRIDAQ) are a coiled coil.

This is an uncharacterized protein from Treponema pallidum (strain Nichols).